The primary structure comprises 319 residues: Ribosomal RNA small subunit methyltransferase H (319 aa).

Residues 37–39, D56, L90, D104, and Q111 contribute to the S-adenosyl-L-methionine site; that span reads GGH.

The protein belongs to the methyltransferase superfamily. RsmH family.

The protein localises to the cytoplasm. It catalyses the reaction cytidine(1402) in 16S rRNA + S-adenosyl-L-methionine = N(4)-methylcytidine(1402) in 16S rRNA + S-adenosyl-L-homocysteine + H(+). Specifically methylates the N4 position of cytidine in position 1402 (C1402) of 16S rRNA. The chain is Ribosomal RNA small subunit methyltransferase H from Nocardioides sp. (strain ATCC BAA-499 / JS614).